Here is a 189-residue protein sequence, read N- to C-terminus: Crossover junction endodeoxyribonuclease RuvC (189 aa).

Active-site residues include aspartate 12, glutamate 72, and aspartate 147. Positions 12, 72, and 147 each coordinate Mg(2+).

Belongs to the RuvC family. Homodimer which binds Holliday junction (HJ) DNA. The HJ becomes 2-fold symmetrical on binding to RuvC with unstacked arms; it has a different conformation from HJ DNA in complex with RuvA. In the full resolvosome a probable DNA-RuvA(4)-RuvB(12)-RuvC(2) complex forms which resolves the HJ. Mg(2+) is required as a cofactor.

Its subcellular location is the cytoplasm. It catalyses the reaction Endonucleolytic cleavage at a junction such as a reciprocal single-stranded crossover between two homologous DNA duplexes (Holliday junction).. The RuvA-RuvB-RuvC complex processes Holliday junction (HJ) DNA during genetic recombination and DNA repair. Endonuclease that resolves HJ intermediates. Cleaves cruciform DNA by making single-stranded nicks across the HJ at symmetrical positions within the homologous arms, yielding a 5'-phosphate and a 3'-hydroxyl group; requires a central core of homology in the junction. The consensus cleavage sequence is 5'-(A/T)TT(C/G)-3'. Cleavage occurs on the 3'-side of the TT dinucleotide at the point of strand exchange. HJ branch migration catalyzed by RuvA-RuvB allows RuvC to scan DNA until it finds its consensus sequence, where it cleaves and resolves the cruciform DNA. The sequence is that of Crossover junction endodeoxyribonuclease RuvC from Porphyromonas gingivalis (strain ATCC BAA-308 / W83).